Reading from the N-terminus, the 441-residue chain is Histidine--tRNA ligase (441 aa).

The protein belongs to the class-II aminoacyl-tRNA synthetase family. In terms of assembly, homodimer.

The protein localises to the cytoplasm. It carries out the reaction tRNA(His) + L-histidine + ATP = L-histidyl-tRNA(His) + AMP + diphosphate + H(+). This Synechococcus sp. (strain WH7803) protein is Histidine--tRNA ligase.